Reading from the N-terminus, the 398-residue chain is Cysteine protease ATG4A (398 aa).

C77 serves as the catalytic Nucleophile. Residues D279 and H281 contribute to the active site. The LIR motif lies at 393–396 (FEIL).

Belongs to the peptidase C54 family. As to quaternary structure, interacts with ATG9A; the interaction is direct.

Its subcellular location is the cytoplasm. It catalyses the reaction [protein]-C-terminal L-amino acid-glycyl-phosphatidylethanolamide + H2O = [protein]-C-terminal L-amino acid-glycine + a 1,2-diacyl-sn-glycero-3-phosphoethanolamine. With respect to regulation, inhibited by N-ethylmaleimide. Redox-regulated during autophagy since reducing conditions activate ATG4A whereas an oxidizing environment such as the presence of H(2)O(2) inhibits its activity. Cysteine protease that plays a key role in autophagy by mediating both proteolytic activation and delipidation of ATG8 family proteins. The protease activity is required for proteolytic activation of ATG8 family proteins: cleaves the C-terminal amino acid of ATG8 proteins to reveal a C-terminal glycine. Exposure of the glycine at the C-terminus is essential for ATG8 proteins conjugation to phosphatidylethanolamine (PE) and insertion to membranes, which is necessary for autophagy. Preferred substrate is GABARAPL2 followed by MAP1LC3A and GABARAP. Protease activity is also required to counteract formation of high-molecular weight conjugates of ATG8 proteins (ATG8ylation): acts as a deubiquitinating-like enzyme that removes ATG8 conjugated to other proteins, such as ATG3. In addition to the protease activity, also mediates delipidation of ATG8 family proteins. Catalyzes delipidation of PE-conjugated forms of ATG8 proteins during macroautophagy. Compared to ATG4B, the major protein for proteolytic activation of ATG8 proteins, shows weaker ability to cleave the C-terminal amino acid of ATG8 proteins, while it displays stronger delipidation activity. Involved in phagophore growth during mitophagy independently of its protease activity and of ATG8 proteins: acts by regulating ATG9A trafficking to mitochondria and promoting phagophore-endoplasmic reticulum contacts during the lipid transfer phase of mitophagy. Functionally, (Microbial infection) Mediates cleavage of an ATG8 protein homolog coded in the genome of cytopathogenic bovine viral diarrhea virus (BVDV). This chain is Cysteine protease ATG4A, found in Bos taurus (Bovine).